Here is a 226-residue protein sequence, read N- to C-terminus: UPF0758 protein CHY_0341 (226 aa).

The region spanning 104–226 is the MPN domain; sequence NFLNPDDVYN…YISMKAERLF (123 aa). Positions 175, 177, and 188 each coordinate Zn(2+). The JAMM motif signature appears at 175–188; sequence HNHPSGDPTPSKED.

This sequence belongs to the UPF0758 family.

In Carboxydothermus hydrogenoformans (strain ATCC BAA-161 / DSM 6008 / Z-2901), this protein is UPF0758 protein CHY_0341.